The chain runs to 347 residues: Selenide, water dikinase (347 aa).

The active site involves Cys16. Residues Lys19 and 47 to 49 (TRD) contribute to the ATP site. Asp50 contacts Mg(2+). Residues Asp67, Asp90, and 138 to 140 (GHS) each bind ATP. Asp90 is a binding site for Mg(2+). Residue Asp226 participates in Mg(2+) binding.

It belongs to the selenophosphate synthase 1 family. Class I subfamily. Homodimer. Mg(2+) is required as a cofactor.

The enzyme catalyses hydrogenselenide + ATP + H2O = selenophosphate + AMP + phosphate + 2 H(+). Synthesizes selenophosphate from selenide and ATP. The protein is Selenide, water dikinase of Photorhabdus laumondii subsp. laumondii (strain DSM 15139 / CIP 105565 / TT01) (Photorhabdus luminescens subsp. laumondii).